Here is a 206-residue protein sequence, read N- to C-terminus: Ras-related protein Ral-A (206 aa).

GTP contacts are provided by residues 24 to 29, 40 to 46, and 127 to 130; these read GVGKSA, VEDYEPT, and NKSD. Positions 43-51 match the Effector region motif; sequence YEPTKADSY. A (Microbial infection) O-linked (Glc) threonine; by P.sordellii toxin TcsL glycan is attached at Thr-46. Position 194 is a phosphoserine; by AURKA (Ser-194). At Cys-203 the chain carries Cysteine methyl ester. Residue Cys-203 is the site of S-geranylgeranyl cysteine attachment. Positions 204-206 are cleaved as a propeptide — removed in mature form; sequence CIL.

Belongs to the small GTPase superfamily. Ras family. In terms of assembly, interacts (via effector domain) with RALBP1; during mitosis, recruits RALBP1 to the mitochondrion where it promotes DNM1L phosphorylation and mitochondrial fission. Interacts with EXOC2/Sec5 and EXOC8/Exo84; binding to EXOC2 and EXOC8 is mutually exclusive. Interacts with Clostridium exoenzyme C3. Interacts with RALGPS1. Interacts with LPAR1 and LPAR2. Interacts with GRK2 in response to LPAR1 activation. RALA and GRK2 binding to LPAR1 is mutually exclusive. Interacts with CDC42. Phosphorylated. Phosphorylation at Ser-194 by AURKA/Aurora kinase A, during mitosis, induces RALA localization to the mitochondrion where it regulates mitochondrial fission. In terms of processing, prenylation is essential for membrane localization. The geranylgeranylated form and the farnesylated mutant do not undergo alternative prenylation in response to geranylgeranyltransferase I inhibitors (GGTIs) and farnesyltransferase I inhibitors (FTIs). Post-translationally, (Microbial infection) Glucosylated at Thr-46 by P.sordellii toxin TcsL from strain 6018. Monoglucosylation completely prevents the recognition of the downstream effector, blocking the GTPases in their inactive form. Not glucosylated by TcsL from strain VPI 9048.

The protein localises to the cell membrane. It localises to the cleavage furrow. The protein resides in the midbody. Its subcellular location is the midbody ring. It is found in the mitochondrion. It catalyses the reaction GTP + H2O = GDP + phosphate + H(+). With respect to regulation, alternates between an inactive form bound to GDP and an active form bound to GTP. Activated by a guanine nucleotide-exchange factor (GEF) and inactivated by a GTPase-activating protein (GAP). In terms of biological role, multifunctional GTPase involved in a variety of cellular processes including gene expression, cell migration, cell proliferation, oncogenic transformation and membrane trafficking. Accomplishes its multiple functions by interacting with distinct downstream effectors. Acts as a GTP sensor for GTP-dependent exocytosis of dense core vesicles. The RALA-exocyst complex regulates integrin-dependent membrane raft exocytosis and growth signaling. Key regulator of LPAR1 signaling and competes with GRK2 for binding to LPAR1 thus affecting the signaling properties of the receptor. Required for anchorage-independent proliferation of transformed cells. During mitosis, supports the stabilization and elongation of the intracellular bridge between dividing cells. Cooperates with EXOC2 to recruit other components of the exocyst to the early midbody. During mitosis, also controls mitochondrial fission by recruiting to the mitochondrion RALBP1, which mediates the phosphorylation and activation of DNM1L by the mitotic kinase cyclin B-CDK1. In Homo sapiens (Human), this protein is Ras-related protein Ral-A (RALA).